The primary structure comprises 156 residues: Small ribosomal subunit protein uS7 (156 aa).

The protein belongs to the universal ribosomal protein uS7 family. Part of the 30S ribosomal subunit. Contacts proteins S9 and S11.

One of the primary rRNA binding proteins, it binds directly to 16S rRNA where it nucleates assembly of the head domain of the 30S subunit. Is located at the subunit interface close to the decoding center, probably blocks exit of the E-site tRNA. The protein is Small ribosomal subunit protein uS7 of Bartonella tribocorum (strain CIP 105476 / IBS 506).